A 152-amino-acid polypeptide reads, in one-letter code: Transcriptional regulator MraZ (152 aa).

2 consecutive SpoVT-AbrB domains span residues 5 to 52 (ATMV…TLPA) and 81 to 124 (ASEC…DEQT).

The protein belongs to the MraZ family. In terms of assembly, forms oligomers.

Its subcellular location is the cytoplasm. The protein resides in the nucleoid. Negatively regulates its own expression and that of the subsequent genes in the proximal part of the division and cell wall (dcw) gene cluster. Acts by binding directly to DNA. May also regulate the expression of genes outside the dcw cluster. The protein is Transcriptional regulator MraZ of Yersinia enterocolitica serotype O:8 / biotype 1B (strain NCTC 13174 / 8081).